The chain runs to 307 residues: Elongation factor Ts (307 aa).

Residues 80–83 are involved in Mg(2+) ion dislocation from EF-Tu; sequence TDFV.

The protein belongs to the EF-Ts family.

It is found in the cytoplasm. Functionally, associates with the EF-Tu.GDP complex and induces the exchange of GDP to GTP. It remains bound to the aminoacyl-tRNA.EF-Tu.GTP complex up to the GTP hydrolysis stage on the ribosome. The polypeptide is Elongation factor Ts (Rhodopseudomonas palustris (strain BisA53)).